The chain runs to 170 residues: Urease accessory protein UreE (170 aa).

The tract at residues 134–170 (ESGAYGGGHHHHGDDGHHPLAPIPLRQKIHRPSDKAE) is disordered.

The protein belongs to the UreE family.

The protein resides in the cytoplasm. Involved in urease metallocenter assembly. Binds nickel. Probably functions as a nickel donor during metallocenter assembly. The sequence is that of Urease accessory protein UreE from Janthinobacterium sp. (strain Marseille) (Minibacterium massiliensis).